Reading from the N-terminus, the 220-residue chain is Ribonuclease P protein subunit p29 (220 aa).

A Phosphoserine modification is found at Ser10.

The protein belongs to the eukaryotic/archaeal RNase P protein component 1 family. Component of nuclear RNase P and RNase MRP ribonucleoproteins. RNase P consists of a catalytic RNA moiety and 10 different protein chains; POP1, POP4, POP5, POP7, RPP14, RPP21, RPP25, RPP30, RPP38 and RPP40. Within the RNase P complex, POP1, POP7 and RPP25 form the 'finger' subcomplex, POP5, RPP14, RPP40 and homodimeric RPP30 form the 'palm' subcomplex, and RPP21, POP4 and RPP38 form the 'wrist' subcomplex. All subunits of the RNase P complex interact with the catalytic RNA. Several subunits of RNase P are also part of the RNase MRP complex. RNase MRP consists of a catalytic RNA moiety and about 8 protein subunits; POP1, POP7, RPP25, RPP30, RPP38, RPP40 and possibly also POP4 and POP5.

The protein localises to the nucleus. The protein resides in the nucleolus. Component of ribonuclease P, a ribonucleoprotein complex that generates mature tRNA molecules by cleaving their 5'-ends. The protein is Ribonuclease P protein subunit p29 (POP4) of Homo sapiens (Human).